The chain runs to 62 residues: uncharacterized protein (62 aa).

It is found in the plastid. The protein resides in the chloroplast. This is an uncharacterized protein from Porphyra purpurea (Red seaweed).